Consider the following 99-residue polypeptide: RING finger protein Z (99 aa).

G2 carries the N-myristoyl glycine; by host lipid modification. The RING-type; atypical zinc-finger motif lies at 31–67; it reads CKSCWFENKGLVECNNHYLCLNCLTLLLSVSNRCPIC. The disordered stretch occupies residues 74–99; sequence KLRPSAAPTAPPTGAADSIRPPPYSP. Residues 77–89 are compositionally biased toward low complexity; the sequence is PSAAPTAPPTGAA. A PTAP/PSAP motif motif is present at residues 81-84; that stretch reads PTAP. The short motif at 94–97 is the PPXY motif element; it reads PPPY.

Belongs to the arenaviridae Z protein family. Interacts with protein NP; this interaction probably directs the encapsidated genome to budding sites. Interacts (via RING domain) with polymerase L; this interaction inhibits viral transcription and replication, Z partially blocks the product exit tunnel for the releasing nascent RNA product. Interacts with the glycoprotein complex; this interaction plays a role in virion budding. Interacts with host eIF4E; this interaction results in eIF4E reduced affinity for its substrate, the 5'-m7 G cap structure. Interacts (via late-budding domain) with host TSG101; this interaction is essential for budding and release of viral particles. Interacts with host RPLP0; this interaction may serve to load ribosome-like particles inside the virion. Interacts with host PML; this interaction induces PML bodies redistribution in the cytoplasm upon viral infection. Interacts with host TAX1BP1. In terms of processing, myristoylation is required for the role of RING finger protein Z in assembly and budding.

It is found in the virion. The protein resides in the host cytoplasm. Its subcellular location is the host perinuclear region. The protein localises to the host cell membrane. Functionally, plays a crucial role in virion assembly and budding. Expressed late in the virus life cycle, it acts as an inhibitor of viral transcription and RNA synthesis by interacting with the viral polymerase L. Presumably recruits the NP encapsidated genome to cellular membranes at budding sites via direct interaction with NP. Plays critical roles in the final steps of viral release by interacting with host TSG101, a member of the vacuolar protein-sorting pathway and using other cellular host proteins involved in vesicle formation pathway. The budding of the virus progeny occurs after association of protein Z with the viral glycoprotein complex SSP-GP1-GP2 at the cell periphery, step that requires myristoylation of protein Z. Also selectively represses protein production by associating with host eIF4E. In cell-based minigenome assay, has an inhibitory effect on the ribonucleoprotein machinery (vRNP), which is responsible for the replication and transcription of the viral genome. The protein is RING finger protein Z of Homo sapiens (Human).